The chain runs to 1224 residues: Integrin alpha pat-2 (1224 aa).

Positions 1-27 (MREGSFPRRTRLLCLLAAVVLISTVTS) are cleaved as a signal peptide. Residues 28-1153 (FNIDTKNVVL…ASEEGRDLPW (1126 aa)) are Extracellular-facing. FG-GAP repeat units lie at residues 29-96 (NIDT…TCRE), 110-173 (NGSH…KTEE), 180-235 (EPAR…TDRP), 236-292 (NTEY…MMIN), 293-347 (LTDE…KPQY), 364-423 (GKQL…GVRE), and 427-490 (QKIE…PESA). N-linked (GlcNAc...) asparagine glycans are attached at residues asparagine 74, asparagine 110, asparagine 230, and asparagine 292. N-linked (GlcNAc...) asparagine glycosylation occurs at asparagine 610. The Cell attachment site signature appears at 622–624 (RGD). N-linked (GlcNAc...) asparagine glycosylation is found at asparagine 681, asparagine 775, and asparagine 819. Disordered regions lie at residues 898-968 (LRIT…QNTG) and 981-1037 (DYEY…KARF). A compositionally biased stretch (acidic residues) spans 920–931 (REEDDESYEDET). Residues 955 to 964 (VYERDEDKIR) show a composition bias toward basic and acidic residues. Over residues 984 to 1003 (YIPDDQEYDGDDFEDDDEDF) the composition is skewed to acidic residues. Over residues 1008 to 1023 (SKRVKRAPVPKKKKKE) the composition is skewed to basic residues. Residues 1024–1037 (GSRSGEPRSDKARF) are compositionally biased toward basic and acidic residues. A helical transmembrane segment spans residues 1154–1174 (WLYLLAILIGLAILILLILLL). At 1175–1224 (WRCGFFKRNRPPTEHAELRAEKQPAAHYADTQSRYAPQDQYSQGRHGQML) the chain is on the cytoplasmic side. Residues 1190–1224 (AELRAEKQPAAHYADTQSRYAPQDQYSQGRHGQML) are disordered. Residues 1204–1224 (DTQSRYAPQDQYSQGRHGQML) show a composition bias toward polar residues.

It belongs to the integrin alpha chain family. Heterodimer of an alpha and a beta subunit. Alpha pat-2 associates with beta pat-3.

The protein localises to the membrane. Functionally, required for muscle development probably through the regulation of the actin-myosin cytoskeleton. During the formation of neuromuscular junctions at the larval stage, negatively regulates membrane protrusion from body wall muscles, probably through lamins such as epi-1, lam-2 and unc-52. Required for distal tip cell migration and dorsal pathfinding. Required for egg-laying. May play a role in cell motility and cell-cell interactions. This chain is Integrin alpha pat-2, found in Caenorhabditis briggsae.